Here is a 178-residue protein sequence, read N- to C-terminus: Large ribosomal subunit protein uL6 (178 aa).

The protein belongs to the universal ribosomal protein uL6 family. Part of the 50S ribosomal subunit.

Its function is as follows. This protein binds to the 23S rRNA, and is important in its secondary structure. It is located near the subunit interface in the base of the L7/L12 stalk, and near the tRNA binding site of the peptidyltransferase center. This chain is Large ribosomal subunit protein uL6, found in Oenococcus oeni (strain ATCC BAA-331 / PSU-1).